We begin with the raw amino-acid sequence, 544 residues long: CTP synthase (544 aa).

Positions 1–265 are amidoligase domain; sequence MTKFIFVTGG…DNIITEQLQL (265 aa). Ser-13 provides a ligand contact to CTP. Ser-13 provides a ligand contact to UTP. Residues 14 to 19 and Asp-71 contribute to the ATP site; that span reads SLGKGI. Residues Asp-71 and Glu-139 each contribute to the Mg(2+) site. CTP contacts are provided by residues 146-148, 186-191, and Lys-222; these read DIE and KTKPTQ. UTP is bound by residues 186 to 191 and Lys-222; that span reads KTKPTQ. A Glutamine amidotransferase type-1 domain is found at 290 to 544; it reads KIAMVGKYVD…VKAALNNKKA (255 aa). Gly-353 is an L-glutamine binding site. The active-site Nucleophile; for glutamine hydrolysis is Cys-380. Residues 381–384, Glu-404, and Arg-471 each bind L-glutamine; that span reads LGMQ. Catalysis depends on residues His-517 and Glu-519.

This sequence belongs to the CTP synthase family. As to quaternary structure, homotetramer.

It catalyses the reaction UTP + L-glutamine + ATP + H2O = CTP + L-glutamate + ADP + phosphate + 2 H(+). The enzyme catalyses L-glutamine + H2O = L-glutamate + NH4(+). The catalysed reaction is UTP + NH4(+) + ATP = CTP + ADP + phosphate + 2 H(+). The protein operates within pyrimidine metabolism; CTP biosynthesis via de novo pathway; CTP from UDP: step 2/2. Its activity is regulated as follows. Allosterically activated by GTP, when glutamine is the substrate; GTP has no effect on the reaction when ammonia is the substrate. The allosteric effector GTP functions by stabilizing the protein conformation that binds the tetrahedral intermediate(s) formed during glutamine hydrolysis. Inhibited by the product CTP, via allosteric rather than competitive inhibition. Catalyzes the ATP-dependent amination of UTP to CTP with either L-glutamine or ammonia as the source of nitrogen. Regulates intracellular CTP levels through interactions with the four ribonucleotide triphosphates. This chain is CTP synthase, found in Neisseria meningitidis serogroup C / serotype 2a (strain ATCC 700532 / DSM 15464 / FAM18).